The sequence spans 944 residues: MAGSIGERREDFKVLNLLGKGSFACVYRAQSINTGIDVAIKMIDKKAMQKVGMVQRVRNEVEIHCQLKHPSILELYNYFEDSNYVYLILEMCHNGEVNRYLKNRKKPFAEDEARHFMHQIVTGMLYLHSHGILHRDLTLSNLLLSSDMNIKIADFGLATQLKMPNEKHFTMCGTPNYIAPEIATRSAHGLESDVWSLGCMLYTFLVGRPPFDTDTVKNTLNKIVLADYEMPDFVSREAKDLIFQLLRKNPADRLSLSSVLDHAFMTGFSNVQSKVMGAVEDSMDSGHATISTGFTGSSGVSISGRFQEKRILSGPSLPNKVNIFQFKDKHPTERSNGGSFHNTQRENNDFSEGNGRKPVACEDRPHSRYLRRAHSSDRSGTSQSQTYAKPSSYSERCHSVEMLAKPTHLKGYRTSSPPNSYGDIPQMFTDERSLERHTSPPVKEKTPSEFMGPAKQTAPRSNDKAETVQQWFGAMQLNGQFKNTPDTSSVSNMGGDFYSQQATQNGAPQYAWNDVKRKKNTDSSIESVLLGIKKNPGTGQRKAEKSQFGEQSKSRVPQQAFGSSTLRSIISPLNAERLKPIRQKTKNAVVSILESGEVCMEFLKEQNSQERVKEVLRISCDGNLIYVYHPNEGKGFPLVDRPPSPPENRLSYTFDSLPEKYWKKYQYAAKFIKLVRSKTPKVTYYTRYAKCMLMENSPTADVEVCFYDGAKIHKTSDVIRVIEKSGRSYTLEGSRLSTLSDEVRSYLDHANESHCVCLSLESAINTEEKKGENISLFPITFGRRPALAESPKTQPTPSVDSARERKEEQSYVNRVLHGSAASPPQMPNLNPSLISYDGSVFSATTVQPSPTSNIHNTPDHAQVLKSVFVENVGWASQLNSGAVWVQFNDGSQLVVQPGVSSIIYTAPNGQITRHGENDKLPEYIKSKLQCLSSILMLFASSSSR.

The 254-residue stretch at 12 to 265 (FKVLNLLGKG…LSSVLDHAFM (254 aa)) folds into the Protein kinase domain. Residues 18–26 (LGKGSFACV) and Lys-41 each bind ATP. Asp-136 serves as the catalytic Proton acceptor. 3 disordered regions span residues 327 to 396 (KDKH…YSER), 432 to 463 (RSLE…RSND), and 530 to 561 (LGIK…QQAF). Polar residues predominate over residues 378–394 (RSGTSQSQTYAKPSSYS). A compositionally biased stretch (basic and acidic residues) spans 432-447 (RSLERHTSPPVKEKTP). The segment covering 548–561 (FGEQSKSRVPQQAF) has biased composition (polar residues). In terms of domain architecture, Cryptic POLO box 1 (CPB1) spans 565–678 (TLRSIISPLN…AKFIKLVRSK (114 aa)). The Cryptic POLO box 2 (CPB2) domain maps to 679 to 791 (TPKVTYYTRY…GRRPALAESP (113 aa)). The tract at residues 786 to 809 (ALAESPKTQPTPSVDSARERKEEQ) is disordered. Residues 862–940 (QVLKSVFVEN…LSSILMLFAS (79 aa)) enclose the POLO box domain.

Belongs to the protein kinase superfamily. Ser/Thr protein kinase family. CDC5/Polo subfamily. As to quaternary structure, homodimer. In terms of processing, ubiquitinated; leading to its degradation by the proteasome.

Its subcellular location is the cytoplasm. The protein localises to the cytoskeleton. It is found in the microtubule organizing center. The protein resides in the centrosome. It localises to the centriole. It catalyses the reaction L-seryl-[protein] + ATP = O-phospho-L-seryl-[protein] + ADP + H(+). The enzyme catalyses L-threonyl-[protein] + ATP = O-phospho-L-threonyl-[protein] + ADP + H(+). Its function is as follows. Serine/threonine-protein kinase that plays a central role in centriole duplication. Able to trigger procentriole formation on the surface of the parental centriole cylinder, leading to the recruitment of centriole biogenesis proteins such as sass6, cpap, ccp110, cep135 and gamma-tubulin. When overexpressed, it is able to induce centrosome amplification through the simultaneous generation of multiple procentrioles adjoining each parental centriole during S phase. Its central role in centriole replication suggests a possible role in tumorigenesis, centrosome aberrations being frequently observed in tumors. Also involved in deuterosome-mediated centriole amplification in multiciliated that can generate more than 100 centrioles. The polypeptide is Serine/threonine-protein kinase PLK4 (Xenopus laevis (African clawed frog)).